The primary structure comprises 319 residues: tRNA-cytidine(32) 2-sulfurtransferase (319 aa).

The short motif at 43–48 (SGGKDS) is the PP-loop motif element. [4Fe-4S] cluster is bound by residues C118, C121, and C209.

Belongs to the TtcA family. In terms of assembly, homodimer. It depends on Mg(2+) as a cofactor. [4Fe-4S] cluster is required as a cofactor.

The protein resides in the cytoplasm. The enzyme catalyses cytidine(32) in tRNA + S-sulfanyl-L-cysteinyl-[cysteine desulfurase] + AH2 + ATP = 2-thiocytidine(32) in tRNA + L-cysteinyl-[cysteine desulfurase] + A + AMP + diphosphate + H(+). Its pathway is tRNA modification. Its function is as follows. Catalyzes the ATP-dependent 2-thiolation of cytidine in position 32 of tRNA, to form 2-thiocytidine (s(2)C32). The sulfur atoms are provided by the cysteine/cysteine desulfurase (IscS) system. In Neisseria gonorrhoeae (strain NCCP11945), this protein is tRNA-cytidine(32) 2-sulfurtransferase.